Reading from the N-terminus, the 223-residue chain is Ras-related protein Rab-32 (223 aa).

Ala-2 is modified (N-acetylalanine). Positions 34, 35, 36, 37, 38, 49, 50, 52, and 55 each coordinate GTP. Thr-37 contacts Mg(2+). A Switch 1 motif is present at residues 46-60 (QLFSQHYRATIGVDF). Thr-55 contacts Mg(2+). The residue at position 69 (Ser-69) is a Phosphoserine. Asp-79 contacts Mg(2+). Positions 82, 141, 142, 144, 173, and 174 each coordinate GTP. The short motif at 82–95 (GQERFGNMTRVYYK) is the Switch 2 element. The PKA-RII subunit binding domain stretch occupies residues 176-195 (NINIDEATRFLVENMLANQQ). S-geranylgeranyl cysteine attachment occurs at residues Cys-222 and Cys-223.

The protein belongs to the small GTPase superfamily. Rab family. As to quaternary structure, interacts with ANKRD27. A decreased interaction with ANKRD27 seen in the presence of SGSM2. Interacts with LRRK2 (via N-terminus); this interaction results in stimulation of RAB10 phosphorylation by LRRK2. The cofactor is Mg(2+). As to expression, widely expressed with highest levels in liver. Strong expression also found in melanocyte, platelet, mast cell and fibroblast cell lines.

The protein localises to the mitochondrion. It is found in the mitochondrion outer membrane. The protein resides in the cytoplasmic vesicle. It localises to the phagosome. Its subcellular location is the phagosome membrane. The protein localises to the melanosome. It is found in the melanosome membrane. It catalyses the reaction GTP + H2O = GDP + phosphate + H(+). Its activity is regulated as follows. Regulated by guanine the nucleotide exchange factor (GEF) BLOC-3 complex composed of HPS1 and HPS4 which promote the exchange of bound GDP for free GTP. Regulated by the GTPase activating protein (GAP) SGSM2/RUTBC1 which increases the GTP hydrolysis activity. Inhibited by GDP dissociation inhibitors (GDIs) which prevent Rab-GDP dissociation. Functionally, the small GTPases Rab are key regulators of intracellular membrane trafficking, from the formation of transport vesicles to their fusion with membranes. Rabs cycle between an inactive GDP-bound form and an active GTP-bound form that is able to recruit to membranes different set of downstream effectors directly responsible for vesicle formation, movement, tethering and fusion. Also acts as an A-kinase anchoring protein by binding to the type II regulatory subunit of protein kinase A and anchoring it to the mitochondrion. Also involved in synchronization of mitochondrial fission. Plays a role in the maturation of phagosomes that engulf pathogens, such as S.aureus and M.tuberculosis. Plays an important role in the control of melanin production and melanosome biogenesis. In concert with RAB38, regulates the proper trafficking of melanogenic enzymes TYR, TYRP1 and DCT/TYRP2 to melanosomes in melanocytes. Stimulates phosphorylation of RAB10 'Thr-73' by LRRK2. The sequence is that of Ras-related protein Rab-32 from Mus musculus (Mouse).